Consider the following 350-residue polypeptide: Alcohol dehydrogenase 1 (350 aa).

C46, H69, C100, C103, C106, C114, and C156 together coordinate Zn(2+). Residues 180–186 (GAGGGLG), D204, K209, 271–273 (VGL), and R343 each bind NAD(+).

It belongs to the zinc-containing alcohol dehydrogenase family. In terms of assembly, homotetramer. The cofactor is Zn(2+).

The protein resides in the cytoplasm. It carries out the reaction a primary alcohol + NAD(+) = an aldehyde + NADH + H(+). The enzyme catalyses a secondary alcohol + NAD(+) = a ketone + NADH + H(+). The chain is Alcohol dehydrogenase 1 (ADH1) from Candida albicans (Yeast).